Consider the following 427-residue polypeptide: Serine--tRNA ligase (427 aa).

231–233 (TAE) contributes to the L-serine binding site. 262-264 (RSE) contacts ATP. Residue E285 coordinates L-serine. An ATP-binding site is contributed by 349–352 (EISS). S385 contributes to the L-serine binding site.

The protein belongs to the class-II aminoacyl-tRNA synthetase family. Type-1 seryl-tRNA synthetase subfamily. As to quaternary structure, homodimer. The tRNA molecule binds across the dimer.

The protein localises to the cytoplasm. The catalysed reaction is tRNA(Ser) + L-serine + ATP = L-seryl-tRNA(Ser) + AMP + diphosphate + H(+). It carries out the reaction tRNA(Sec) + L-serine + ATP = L-seryl-tRNA(Sec) + AMP + diphosphate + H(+). Its pathway is aminoacyl-tRNA biosynthesis; selenocysteinyl-tRNA(Sec) biosynthesis; L-seryl-tRNA(Sec) from L-serine and tRNA(Sec): step 1/1. Its function is as follows. Catalyzes the attachment of serine to tRNA(Ser). Is also able to aminoacylate tRNA(Sec) with serine, to form the misacylated tRNA L-seryl-tRNA(Sec), which will be further converted into selenocysteinyl-tRNA(Sec). This is Serine--tRNA ligase from Methylococcus capsulatus (strain ATCC 33009 / NCIMB 11132 / Bath).